Reading from the N-terminus, the 387-residue chain is N-acetylglucosamine-6-phosphate deacetylase (387 aa).

A divalent metal cation is bound by residues histidine 62, histidine 64, and glutamate 132. Residue 143-144 (AQ) coordinates substrate. The a divalent metal cation site is built by histidine 198 and histidine 219. Residues 222 to 223 (NQ), arginine 230, and 251 to 254 (DFIH) contribute to the substrate site. Residue aspartate 277 participates in a divalent metal cation binding. The Proton donor/acceptor role is filled by aspartate 277. Position 310 to 312 (310 to 312 (LAG)) interacts with substrate.

Belongs to the metallo-dependent hydrolases superfamily. NagA family. Homodimer. The cofactor is a divalent metal cation.

It catalyses the reaction N-acetyl-D-glucosamine 6-phosphate + H2O = D-glucosamine 6-phosphate + acetate. It functions in the pathway amino-sugar metabolism; N-acetylneuraminate degradation; D-fructose 6-phosphate from N-acetylneuraminate: step 4/5. Involved in the first committed step in the biosynthesis of amino-sugar-nucleotides. Catalyzes the hydrolysis of the N-acetyl group of N-acetylglucosamine-6-phosphate (GlcNAc-6-P) to yield glucosamine 6-phosphate and acetate. In Lysinibacillus sphaericus (Bacillus sphaericus), this protein is N-acetylglucosamine-6-phosphate deacetylase (nagA).